We begin with the raw amino-acid sequence, 570 residues long: Urease subunit alpha 1 (570 aa).

The 440-residue stretch at 131 to 570 (GGIDTHVHFI…VPMAQRYFLF (440 aa)) folds into the Urease domain. The Ni(2+) site is built by His-136, His-138, and Lys-219. Lys-219 is subject to N6-carboxylysine. Residue His-221 coordinates substrate. 2 residues coordinate Ni(2+): His-248 and His-274. The active-site Proton donor is His-322. Position 362 (Asp-362) interacts with Ni(2+).

Belongs to the metallo-dependent hydrolases superfamily. Urease alpha subunit family. Heterotrimer of UreA (gamma), UreB (beta) and UreC (alpha) subunits. Three heterotrimers associate to form the active enzyme. It depends on Ni cation as a cofactor. Post-translationally, carboxylation allows a single lysine to coordinate two nickel ions.

The protein localises to the cytoplasm. It carries out the reaction urea + 2 H2O + H(+) = hydrogencarbonate + 2 NH4(+). Its pathway is nitrogen metabolism; urea degradation; CO(2) and NH(3) from urea (urease route): step 1/1. Disrupting the ure1 operon causes loss of urease activity, decreased resistance to low pH killing in vitro and decreased pathogen survival when inoculated in BALB/c mice by gavage. The chain is Urease subunit alpha 1 from Brucella suis biovar 1 (strain 1330).